Consider the following 20-residue polypeptide: T cell receptor alpha joining 42 (20 aa).

The disordered stretch occupies residues 1-20; it reads YGGSQGNLIFGKGTKLSVKP.

In terms of assembly, alpha-beta TR is a heterodimer composed of an alpha and beta chain; disulfide-linked. The alpha-beta TR is associated with the transmembrane signaling CD3 coreceptor proteins to form the TR-CD3 (TcR or TCR). The assembly of alpha-beta TR heterodimers with CD3 occurs in the endoplasmic reticulum where a single alpha-beta TR heterodimer associates with one CD3D-CD3E heterodimer, one CD3G-CD3E heterodimer and one CD247 homodimer forming a stable octameric structure. CD3D-CD3E and CD3G-CD3E heterodimers preferentially associate with TR alpha and TR beta chains, respectively. The association of the CD247 homodimer is the last step of TcR assembly in the endoplasmic reticulum and is required for transport to the cell surface.

It is found in the cell membrane. Functionally, j region of the variable domain of T cell receptor (TR) alpha chain that participates in the antigen recognition. Alpha-beta T cell receptors are antigen specific receptors which are essential to the immune response and are present on the cell surface of T lymphocytes. Recognize peptide-major histocompatibility (MH) (pMH) complexes that are displayed by antigen presenting cells (APC), a prerequisite for efficient T cell adaptive immunity against pathogens. Binding of alpha-beta TR to pMH complex initiates TR-CD3 clustering on the cell surface and intracellular activation of LCK that phosphorylates the ITAM motifs of CD3G, CD3D, CD3E and CD247 enabling the recruitment of ZAP70. In turn, ZAP70 phosphorylates LAT, which recruits numerous signaling molecules to form the LAT signalosome. The LAT signalosome propagates signal branching to three major signaling pathways, the calcium, the mitogen-activated protein kinase (MAPK) kinase and the nuclear factor NF-kappa-B (NF-kB) pathways, leading to the mobilization of transcription factors that are critical for gene expression and essential for T cell growth and differentiation. The T cell repertoire is generated in the thymus, by V-(D)-J rearrangement. This repertoire is then shaped by intrathymic selection events to generate a peripheral T cell pool of self-MH restricted, non-autoaggressive T cells. Post-thymic interaction of alpha-beta TR with the pMH complexes shapes TR structural and functional avidity. The sequence is that of T cell receptor alpha joining 42 from Homo sapiens (Human).